We begin with the raw amino-acid sequence, 225 residues long: Ribonuclease 3 (225 aa).

An RNase III domain is found at 4 to 133 (FEKLETLLGY…LIAAIYLDSN (130 aa)). Glu-46 is a Mg(2+) binding site. Asp-50 is an active-site residue. Asn-119 and Glu-122 together coordinate Mg(2+). Glu-122 is an active-site residue. Residues 158-225 (DPKTALQEWA…AARSLLHRLK (68 aa)) enclose the DRBM domain.

The protein belongs to the ribonuclease III family. Homodimer. Requires Mg(2+) as cofactor.

The protein resides in the cytoplasm. The catalysed reaction is Endonucleolytic cleavage to 5'-phosphomonoester.. Digests double-stranded RNA. Involved in the processing of primary rRNA transcript to yield the immediate precursors to the large and small rRNAs (23S and 16S). Processes some mRNAs, and tRNAs when they are encoded in the rRNA operon. Processes pre-crRNA and tracrRNA of type II CRISPR loci if present in the organism. This is Ribonuclease 3 from Rickettsia prowazekii (strain Madrid E).